A 314-amino-acid chain; its full sequence is Protein SPOROCYTELESS (314 aa).

A compositionally biased stretch (polar residues) spans 1–17; sequence MATSLFFMSTDQNSVGN. Disordered regions lie at residues 1-20 and 33-62; these read MATS…NPND and GEIR…PTLR. The short motif at 62–70 is the SPL element; it reads RGMGVAKLE. Positions 308–314 match the EAR motif; sequence IDLSLKL.

It belongs to the NOZZLE family. Homodimer and heterodimer with SPEARs. Interacts in vitro with YAB1, YAB3 and YAB4. Interacts (via EAR motif) with TPL, TPR1, TPR2, TPR3 and TPR4. Interacts with SPEAR1, SPEAR2, SPEAR3, SPEAR4, TCP1, TCP6, TCP8, TCP9, TCP11, TCP15, TCP20, TCP21 and TCP23. Interacts with TCP2, TCP3, TCP4, TCP5, TCP10, TCP13, TCP17 and TCP24. Expressed in flower buds. Not found in leaves, siliques and stems. Detected in rosette leaves, stem tissue and seedlings.

It localises to the nucleus. Functionally, transcriptional regulator of sporocyte development. Acts as an adapter-like transcriptional repressor recruiting TPL/TPR corepressors to inhibit TCP transcription factors. Required for nucellus and embryo sac development. Plays a central role in patterning both the proximal-distal and the adaxial-abaxial axes during ovule development. Involved in establishing the prospective chalaza of the ovule and in controlling the cell number and the length of the funiculus, and is required for the development of the integuments. Required, with BEL1, for cytokinin-induced PIN1 expression in ovules. Involved in controlling stamen identity. May also regulate the morphology of lateral organs by repressing auxin production. This chain is Protein SPOROCYTELESS, found in Arabidopsis thaliana (Mouse-ear cress).